Consider the following 213-residue polypeptide: Small ribosomal subunit protein uS5 (213 aa).

The disordered stretch occupies residues 1 to 41 (MSGRERNGGRSAENNDKKERNERNGRNDRGGRNDRRNQQDE). The region spanning 45–108 (FIERVVTINR…EEARKNFFRV (64 aa)) is the S5 DRBM domain.

This sequence belongs to the universal ribosomal protein uS5 family. In terms of assembly, part of the 30S ribosomal subunit. Contacts proteins S4 and S8.

Its function is as follows. With S4 and S12 plays an important role in translational accuracy. In terms of biological role, located at the back of the 30S subunit body where it stabilizes the conformation of the head with respect to the body. The sequence is that of Small ribosomal subunit protein uS5 from Corynebacterium jeikeium (strain K411).